A 462-amino-acid chain; its full sequence is Fumarate hydratase class II (462 aa).

Substrate contacts are provided by residues 97–99 (SGT), 127–130 (HPND), 137–139 (SSN), and Thr-185. Catalysis depends on His-186, which acts as the Proton donor/acceptor. The active site involves Ser-316. Substrate is bound by residues Ser-317 and 322 to 324 (KVN).

Belongs to the class-II fumarase/aspartase family. Fumarase subfamily. Homotetramer.

Its subcellular location is the cytoplasm. The enzyme catalyses (S)-malate = fumarate + H2O. Its pathway is carbohydrate metabolism; tricarboxylic acid cycle; (S)-malate from fumarate: step 1/1. Its function is as follows. Involved in the TCA cycle. Catalyzes the stereospecific interconversion of fumarate to L-malate. This Halalkalibacterium halodurans (strain ATCC BAA-125 / DSM 18197 / FERM 7344 / JCM 9153 / C-125) (Bacillus halodurans) protein is Fumarate hydratase class II.